We begin with the raw amino-acid sequence, 336 residues long: uncharacterized protein (336 aa).

A signal peptide spans 1-23; sequence MKTRHLVYLAFALLGLGLAGLLE. Helical transmembrane passes span 34–54, 75–95, and 106–126; these read LLSL…LLLG, VVVA…LLTT, and VHSL…ALGY. The PINc domain occupies 144-255; that stretch reads VLDTSVLVDG…MARIYGVKAL (112 aa). Mg(2+) is bound at residue aspartate 222. The TRAM domain maps to 267–328; the sequence is QLQVGDTLKL…IQTQVGRLFF (62 aa).

The protein belongs to the PINc/VapC protein family. Mg(2+) is required as a cofactor.

The protein localises to the membrane. Part of a toxin-antitoxin (TA) system. An RNase. This is an uncharacterized protein from Thermus thermophilus (strain ATCC 27634 / DSM 579 / HB8).